Reading from the N-terminus, the 1244-residue chain is SWI/SNF chromatin remodeling complex subunit swsn-7 (1244 aa).

The 93-residue stretch at 24–116 (QRKMAEFYNS…YLSKFEQVET (93 aa)) folds into the ARID domain. Residues 486–496 (FTQGSNQQQNP) are compositionally biased toward polar residues. Disordered stretches follow at residues 486-534 (FTQG…GAAP), 556-583 (NREQ…ILAH), and 597-619 (DRRT…ESQL). A compositionally biased stretch (low complexity) spans 497–508 (HHSQGGHQLGHS). The span at 556-566 (NREQYSTQSSQ) shows a compositional bias: polar residues. Residues 567–578 (PHPPHTNVPPSP) are compositionally biased toward pro residues. Over residues 610-619 (PSTNSGESQL) the composition is skewed to polar residues. A DNA-binding region (RFX-type winged-helix) is located at residues 623 to 697 (TEKWIRQNCV…IVAQGIRLIR (75 aa)). The interval 1134 to 1244 (EEEQQKMLSE…TTPVRAGAGI (111 aa)) is disordered. Positions 1142–1158 (SEVPSSASLSSMAGSSS) are enriched in low complexity. 2 stretches are compositionally biased toward polar residues: residues 1159–1186 (QLPT…SNKP) and 1194–1212 (LNFS…FTAG). The span at 1220–1231 (PIQQHIPSQPSP) shows a compositional bias: low complexity.

In terms of assembly, component of the SWI/SNF-B (PBAF) chromatin remodeling complex.

The protein localises to the nucleus. Involved in transcriptional activation and repression of select genes by chromatin remodeling (alteration of DNA-nucleosome topology). Required for the stability of the SWI/SNF chromatin remodeling complex SWI/SNF-B (PBAF). Required for regulation of a stress response gene network, probably as part of the PBAF complex and perhaps acting in concert with histone demethylase jmjc-1. Binds to the ethanol and stress response elements (ESRE) in the promoter regions of hsp-16.1 and hsp-16.2, probably as part of the PBAF complex. This is SWI/SNF chromatin remodeling complex subunit swsn-7 from Caenorhabditis elegans.